The sequence spans 397 residues: MEDYNNQMDHESSGGRGNFLYASPNLGGNYGRAASDHQMGINTFHLQSSGGGGGGGSGDQCNFQSPGTHPINVKTEATTSQHGHQKFQYNNNNNSHLVSSSRGHQPVIHQLQNNFDLLNDDHSLSSNEVEAIKAKIIAHPQYSNLLEAYMDCQRVGAPSDVVARLSVARQEFEARQRSSGTSRETSKDPELDQFMEAYYDMLVKYREELTRPIQEAMDFMRRIETQLNMLGNNNNAPPLRIFSPSEDKCEGIGSSEEEQENSGGETEVPEIDPRAEDRELKNHLLRKYSGYLSSLKQELSKKKKKGKLPKDARQKLLSWWELHYKWPYPSESEKVALAESTGLDQKQINNWFINQRKRHWKPSEDMQFMVMDGLHPQNAALYMDGHYIGDGHYRLGP.

3 disordered regions span residues 43–68, 172–191, and 233–276; these read TFHL…SPGT, FEAR…DPEL, and NNNA…PRAE. Residues 49 to 58 show a composition bias toward gly residues; the sequence is SGGGGGGGSG. An ELK domain is found at 279–299; the sequence is ELKNHLLRKYSGYLSSLKQEL. A DNA-binding region (homeobox; TALE-type) is located at residues 300–363; that stretch reads SKKKKKGKLP…NQRKRHWKPS (64 aa).

The protein belongs to the TALE/KNOX homeobox family. In terms of tissue distribution, expressed only in the stems.

It localises to the nucleus. In terms of biological role, probably binds to the DNA sequence 5'-TGAC-3'. The protein is Homeobox protein knotted-1-like 2 of Malus domestica (Apple).